Here is a 779-residue protein sequence, read N- to C-terminus: MEQGRPRSSLSLTSSASTVSSLSSLSAKKPTRVVHKVHAFGKRNNALRRDPNLPVHIRGWLHKQDSSGLRLWKRRWFVLSGHCLFYYKDSREESVLGSVLLPSYSVRPDGPGAPRGRRFTFTAEHPGMRTYVLAADTLEDLRGWLRALGKASRAEGEDCGLPRSPARPRPGEGPGGPGGPPEVNRREEGRTSESPEVAPLSRGPGRHEMHAPGSSADLQPDTWSRRTRSPEPFSPLSRPPSPLSLPRPRSAPVRRPPLSAGDISFPARPHTPLSRIDVRPPLDWGPQRQTLSRPPIPRRGPFSEAGGGRPPRSPQLRTPEHRTQSTQVSSGSSTYLQLPPRPPGTQASMILLPGPPVDSTLHQSLETDTLLTKLCGQDRLLRQLQEDLDKRQEEKEQLEAALELTRQQLGQATREAAASGKAWGRQRLLQDRLVNVRAALCHLTQERERVWDTYSGLEQDLGTLRETLEYLLHLGSPQDRASAQQQLWMVEDTLAGLGGPQKQPPHTEPKSPSPAPQREESSERESLSESLELSSPQSPEVDWGQPPGGDRALSSSQSGVGSPRVSRASSPECRQQSSPLLRTKAPLARPRMSAQEQLERMRRNQACGLSLPRPTSPRLLTLGRTLSPVPRQPDMEQRPIVGAAKWLRSSGSWSSPRHSTTYSPVSGGHRERVLSLSQALATEASQWHRLMTASPERNLDTRGDCLQPSPQPPSEELPQVTSSPTSHKANSATTGFSCQGSGRGLAPWEPRWDPGKAPPALAQEEGAWPLRVTLLQSSF.

The 100-residue stretch at 54 to 153 (PVHIRGWLHK…WLRALGKASR (100 aa)) folds into the PH domain. Disordered stretches follow at residues 152–355 (SRAE…LPGP), 495–669 (AGLG…SGGH), and 694–766 (SPER…QEEG). Serine 164 carries the phosphoserine modification. A compositionally biased stretch (basic and acidic residues) spans 183–193 (VNRREEGRTSE). Low complexity-rich tracts occupy residues 246–259 (PRPRSAPVRRPPLS) and 324–334 (QSTQVSSGSST). Basic and acidic residues predominate over residues 517–527 (QREESSERESL). A compositionally biased stretch (low complexity) spans 528-540 (SESLELSSPQSPE). The residue at position 562 (serine 562) is a Phosphoserine. Over residues 567–580 (RASSPECRQQSSPL) the composition is skewed to polar residues. Low complexity-rich tracts occupy residues 608–627 (GLSLPRPTSPRLLTLGRTLS) and 649–659 (SSGSWSSPRHS). A compositionally biased stretch (polar residues) spans 720-740 (VTSSPTSHKANSATTGFSCQG).

It localises to the cytoplasm. The protein localises to the membrane. Functionally, binds specifically to phosphatidylinositol 3-phosphate (PtdIns3P), but not to other phosphoinositides. The sequence is that of Pleckstrin homology domain-containing family A member 4 (Plekha4) from Rattus norvegicus (Rat).